A 434-amino-acid chain; its full sequence is 4-hydroxy-3-methylbut-2-en-1-yl diphosphate synthase (flavodoxin) (434 aa).

The segment covering 1-15 (MQSEAQSPRSSQICS) has biased composition (polar residues). The disordered stretch occupies residues 1-24 (MQSEAQSPRSSQICSTEPVFGGHQ). [4Fe-4S] cluster contacts are provided by Cys-322, Cys-325, Cys-368, and Glu-375.

Belongs to the IspG family. [4Fe-4S] cluster serves as cofactor.

It carries out the reaction (2E)-4-hydroxy-3-methylbut-2-enyl diphosphate + oxidized [flavodoxin] + H2O + 2 H(+) = 2-C-methyl-D-erythritol 2,4-cyclic diphosphate + reduced [flavodoxin]. Its pathway is isoprenoid biosynthesis; isopentenyl diphosphate biosynthesis via DXP pathway; isopentenyl diphosphate from 1-deoxy-D-xylulose 5-phosphate: step 5/6. Its function is as follows. Converts 2C-methyl-D-erythritol 2,4-cyclodiphosphate (ME-2,4cPP) into 1-hydroxy-2-methyl-2-(E)-butenyl 4-diphosphate. The chain is 4-hydroxy-3-methylbut-2-en-1-yl diphosphate synthase (flavodoxin) from Burkholderia cenocepacia (strain ATCC BAA-245 / DSM 16553 / LMG 16656 / NCTC 13227 / J2315 / CF5610) (Burkholderia cepacia (strain J2315)).